Here is a 1486-residue protein sequence, read N- to C-terminus: Chromosome partition protein MukB (1486 aa).

34 to 41 contributes to the ATP binding site; the sequence is GGNGAGKS. 3 coiled-coil regions span residues 326-418, 444-480, and 509-603; these read LEAD…QYNQ, LETF…QAYQ, and RHLA…RAPV. Positions 666–783 are flexible hinge; that stretch reads PGGSEDQRLN…EVPLFGRAAR (118 aa). 3 coiled-coil regions span residues 835–923, 977–1115, and 1209–1266; these read EAEI…AKLE, EMLS…TAKA, and VEAI…QNVS.

The protein belongs to the SMC family. MukB subfamily. In terms of assembly, homodimerization via its hinge domain. Binds to DNA via its C-terminal region. Interacts, and probably forms a ternary complex, with MukE and MukF via its C-terminal region. The complex formation is stimulated by calcium or magnesium. Interacts with tubulin-related protein FtsZ.

The protein resides in the cytoplasm. It localises to the nucleoid. Functionally, plays a central role in chromosome condensation, segregation and cell cycle progression. Functions as a homodimer, which is essential for chromosome partition. Involved in negative DNA supercoiling in vivo, and by this means organize and compact chromosomes. May achieve or facilitate chromosome segregation by condensation DNA from both sides of a centrally located replisome during cell division. This chain is Chromosome partition protein MukB, found in Escherichia coli (strain K12 / MC4100 / BW2952).